Consider the following 477-residue polypeptide: Cysteine--tRNA ligase (477 aa).

Cysteine 28 is a Zn(2+) binding site. The 'HIGH' region signature appears at 30-40 (PTVYDYAHIGN). 3 residues coordinate Zn(2+): cysteine 213, histidine 238, and glutamate 242. The 'KMSKS' region motif lies at 270-274 (KMSKS). Lysine 273 provides a ligand contact to ATP.

This sequence belongs to the class-I aminoacyl-tRNA synthetase family. Monomer. Requires Zn(2+) as cofactor.

It localises to the cytoplasm. The enzyme catalyses tRNA(Cys) + L-cysteine + ATP = L-cysteinyl-tRNA(Cys) + AMP + diphosphate. In Chlamydia trachomatis serovar D (strain ATCC VR-885 / DSM 19411 / UW-3/Cx), this protein is Cysteine--tRNA ligase (cysS).